The sequence spans 332 residues: Large ribosomal subunit protein uL29m (332 aa).

A disordered region spans residues 19 to 40 (RFTKPKPKPAKRENVRLPTQRT). A coiled-coil region spans residues 264 to 327 (TSENTESAIA…IQLQEEDAKN (64 aa)).

Belongs to the universal ribosomal protein uL29 family. In terms of assembly, component of the mitochondrial large ribosomal subunit. Mature mitochondrial ribosomes consist of a small (37S) and a large (54S) subunit. The 37S subunit contains at least 33 different proteins and 1 molecule of RNA (15S). The 54S subunit contains at least 45 different proteins and 1 molecule of RNA (21S).

It is found in the mitochondrion. The protein is Large ribosomal subunit protein uL29m (MRPL4) of Kluyveromyces lactis (strain ATCC 8585 / CBS 2359 / DSM 70799 / NBRC 1267 / NRRL Y-1140 / WM37) (Yeast).